The following is a 526-amino-acid chain: MFDSNHEQELSKRRTFAIISHPDAGKTTITEKMLFFGKVIRVPGTIKGRGSGKYAKSDWMNIEKERGISITTSVMQFTYKNILMNLLDTPGHQDFSEDTYRILTAVDCCLVVIDAAKGIEERTRKLMDVARIHNTPIITFINKLDRDSRDPIEILDEIEKELKLHCIPISWPISCGKNFRGVYHIYDKIIHLYKSKFRKNFLTLDSFLDGSLNEYLGADLSIHIRQELELIMNVYSKFNKEKFLKGITTPIFFGSALGNFGIDHLLDSLIKWAPSPLYRQSNKRIIKPQERKFTGFIFKIQANMDLKHRDRIAFMRIVSGQYTKGMKLTHVRIKKNIIISDAFSFLAGERISINKAYPGDVIGLHNHGTIKIGDTFTQGEEIKFIGIPSFAPEIFRLIYLKNPLKQKQLKKGLVQLSEEGTVQVFRPILNNDLILGAIGILQFDVVIERLRIEYNIDAVYKKVNIVLARWINYGNHHSLYNLKKSYSSYLAYDISNSLIYLAPSSANLNIVMSQNSDISFNATREQ.

Residues 11–277 (SKRRTFAIIS…SLIKWAPSPL (267 aa)) enclose the tr-type G domain. Residues 20 to 27 (SHPDAGKT), 88 to 92 (DTPGH), and 142 to 145 (NKLD) contribute to the GTP site.

This sequence belongs to the TRAFAC class translation factor GTPase superfamily. Classic translation factor GTPase family. PrfC subfamily.

It localises to the cytoplasm. Its function is as follows. Increases the formation of ribosomal termination complexes and stimulates activities of RF-1 and RF-2. It binds guanine nucleotides and has strong preference for UGA stop codons. It may interact directly with the ribosome. The stimulation of RF-1 and RF-2 is significantly reduced by GTP and GDP, but not by GMP. The chain is Peptide chain release factor 3 (prfC) from Buchnera aphidicola subsp. Acyrthosiphon pisum (strain APS) (Acyrthosiphon pisum symbiotic bacterium).